We begin with the raw amino-acid sequence, 139 residues long: Cytochrome c-type biogenesis protein CcmE (139 aa).

Topologically, residues 1-7 (MTKRQNR) are cytoplasmic. Residues 8-28 (MTLVALLVIGVSLTGYLGLKA) traverse the membrane as a helical; Signal-anchor for type II membrane protein segment. Topologically, residues 29 to 139 (FNENLLYFFS…ADALEKAKNK (111 aa)) are periplasmic. Positions 120 and 124 each coordinate heme.

This sequence belongs to the CcmE/CycJ family.

It localises to the cell inner membrane. Its function is as follows. Heme chaperone required for the biogenesis of c-type cytochromes. Transiently binds heme delivered by CcmC and transfers the heme to apo-cytochromes in a process facilitated by CcmF and CcmH. The chain is Cytochrome c-type biogenesis protein CcmE from Ruthia magnifica subsp. Calyptogena magnifica.